The sequence spans 247 residues: tRNA (guanine-N(1)-)-methyltransferase (247 aa).

Residues G113 and 133–138 (IGDFVM) each bind S-adenosyl-L-methionine.

It belongs to the RNA methyltransferase TrmD family. Homodimer.

The protein resides in the cytoplasm. It carries out the reaction guanosine(37) in tRNA + S-adenosyl-L-methionine = N(1)-methylguanosine(37) in tRNA + S-adenosyl-L-homocysteine + H(+). Its function is as follows. Specifically methylates guanosine-37 in various tRNAs. This is tRNA (guanine-N(1)-)-methyltransferase from Vibrio campbellii (strain ATCC BAA-1116).